The primary structure comprises 383 residues: Probable butyrate kinase (383 aa).

The protein belongs to the acetokinase family.

The protein resides in the cytoplasm. It carries out the reaction butanoate + ATP = butanoyl phosphate + ADP. The polypeptide is Probable butyrate kinase (Deinococcus radiodurans (strain ATCC 13939 / DSM 20539 / JCM 16871 / CCUG 27074 / LMG 4051 / NBRC 15346 / NCIMB 9279 / VKM B-1422 / R1)).